A 351-amino-acid chain; its full sequence is 4-hydroxy-3-methylbut-2-enyl diphosphate reductase (351 aa).

Cys-18 is a binding site for [4Fe-4S] cluster. His-47 and His-83 together coordinate (2E)-4-hydroxy-3-methylbut-2-enyl diphosphate. Residues His-47 and His-83 each coordinate dimethylallyl diphosphate. Isopentenyl diphosphate-binding residues include His-47 and His-83. Cys-105 serves as a coordination point for [4Fe-4S] cluster. His-133 provides a ligand contact to (2E)-4-hydroxy-3-methylbut-2-enyl diphosphate. Dimethylallyl diphosphate is bound at residue His-133. His-133 serves as a coordination point for isopentenyl diphosphate. The active-site Proton donor is the Glu-135. Thr-174 serves as a coordination point for (2E)-4-hydroxy-3-methylbut-2-enyl diphosphate. Cys-204 lines the [4Fe-4S] cluster pocket. (2E)-4-hydroxy-3-methylbut-2-enyl diphosphate contacts are provided by Ser-232, Ser-233, Asn-234, and Ser-277. Ser-232, Ser-233, Asn-234, and Ser-277 together coordinate dimethylallyl diphosphate. Isopentenyl diphosphate-binding residues include Ser-232, Ser-233, Asn-234, and Ser-277.

This sequence belongs to the IspH family. It depends on [4Fe-4S] cluster as a cofactor.

The catalysed reaction is isopentenyl diphosphate + 2 oxidized [2Fe-2S]-[ferredoxin] + H2O = (2E)-4-hydroxy-3-methylbut-2-enyl diphosphate + 2 reduced [2Fe-2S]-[ferredoxin] + 2 H(+). The enzyme catalyses dimethylallyl diphosphate + 2 oxidized [2Fe-2S]-[ferredoxin] + H2O = (2E)-4-hydroxy-3-methylbut-2-enyl diphosphate + 2 reduced [2Fe-2S]-[ferredoxin] + 2 H(+). Its pathway is isoprenoid biosynthesis; dimethylallyl diphosphate biosynthesis; dimethylallyl diphosphate from (2E)-4-hydroxy-3-methylbutenyl diphosphate: step 1/1. It functions in the pathway isoprenoid biosynthesis; isopentenyl diphosphate biosynthesis via DXP pathway; isopentenyl diphosphate from 1-deoxy-D-xylulose 5-phosphate: step 6/6. Functionally, catalyzes the conversion of 1-hydroxy-2-methyl-2-(E)-butenyl 4-diphosphate (HMBPP) into a mixture of isopentenyl diphosphate (IPP) and dimethylallyl diphosphate (DMAPP). Acts in the terminal step of the DOXP/MEP pathway for isoprenoid precursor biosynthesis. The sequence is that of 4-hydroxy-3-methylbut-2-enyl diphosphate reductase from Bartonella tribocorum (strain CIP 105476 / IBS 506).